The chain runs to 426 residues: Histidine--tRNA ligase (426 aa).

The protein belongs to the class-II aminoacyl-tRNA synthetase family. As to quaternary structure, homodimer.

It is found in the cytoplasm. The catalysed reaction is tRNA(His) + L-histidine + ATP = L-histidyl-tRNA(His) + AMP + diphosphate + H(+). This Streptococcus pyogenes serotype M1 protein is Histidine--tRNA ligase.